The sequence spans 461 residues: ATP synthase subunit beta 2 (461 aa).

Glycine 151–threonine 158 is a binding site for ATP.

It belongs to the ATPase alpha/beta chains family. F-type ATPases have 2 components, CF(1) - the catalytic core - and CF(0) - the membrane proton channel. CF(1) has five subunits: alpha(3), beta(3), gamma(1), delta(1), epsilon(1). CF(0) has three main subunits: a(1), b(2) and c(9-12). The alpha and beta chains form an alternating ring which encloses part of the gamma chain. CF(1) is attached to CF(0) by a central stalk formed by the gamma and epsilon chains, while a peripheral stalk is formed by the delta and b chains.

Its subcellular location is the cell inner membrane. It carries out the reaction ATP + H2O + 4 H(+)(in) = ADP + phosphate + 5 H(+)(out). In terms of biological role, produces ATP from ADP in the presence of a proton gradient across the membrane. The catalytic sites are hosted primarily by the beta subunits. The chain is ATP synthase subunit beta 2 from Vibrio campbellii (strain ATCC BAA-1116).